We begin with the raw amino-acid sequence, 901 residues long: MLIKLLTKVFGSRNDRTLRRMRKAVTVINAMEPEMEKLSDDELKAKTVEFRARLDKGETVESLIPEAFAVVREASKRVFGMRHFDVQLLGGMVLNERCIAEMRTGEGKTLTATLPAYLNALSGKGVHVVTVNDYLAQRDAENNRPLFEFLGMSVGINMSGLPAPAKREAYGADITYGTNNEYGFDYLRDNMAFSPEERVQRKLHYALVDEVDSILIDEARTPLIISGPAEDSSDMYRKVDKIIPHLIRQEKEDSDTFQGEGHFSVDEKARQVNLTERGLIQIEELLVEQGIMEEGESLYSPTNIMLMHHVTAALRAHALFTRDVDYIVKDGEVIIVDEHTGRTMQGRRWSDGLHQAVEAKEGVDIQNENQTLASITFQNYFRLYEKLAGMTGTADTEAFEFSSIYKLDTVVVPTNRPMIRKDMPDLVYMTEAEKIQAIIEDIRERTAAGQPVLVGTISIEKSEVVSHELEKAGIKHNVLNAKFHAKEADIVAQAGYPAAVTIATNMAGRGTDIVLGGSWQSELAELENPTPEQIAQVKADWQVRHDAVLASGGLHIIGTERHESRRIDNQLRGRAGRQGDAGSSRFYLSMEDALMRIFASDRVSGMMRKLGMKPGEAIEHPWVTKAIANAQRKVESRNFDIRKQLLEYDDVANDQRRAIYTQRNELLDVTDVSETINSIREDVFKATIDAYIPPQSLEEMWDVEGLQERLKNDFDLELPVKEWLDKEPELHEETLRERILENAIEVYKRKEEVVGTEMMRHFEKGVMLQTLDSLWKEHLAAMDYLRQGIHLRGYAQKDPKQEYKRESFAMFATMLESLKYEVISTLGKVQVRMPEEVEAMEQQRREEAERLAQMQQLSHQTDENEAAEAIAAQTGDRKVGRNDPCPCGSGKKYKSCHGRLS.

Residues Q87, 105-109 (GEGKT), and D512 each bind ATP. A disordered region spans residues 853–901 (QMQQLSHQTDENEAAEAIAAQTGDRKVGRNDPCPCGSGKKYKSCHGRLS). Positions 885, 887, 896, and 897 each coordinate Zn(2+). Over residues 891–901 (KKYKSCHGRLS) the composition is skewed to basic residues.

The protein belongs to the SecA family. Monomer and homodimer. Part of the essential Sec protein translocation apparatus which comprises SecA, SecYEG and auxiliary proteins SecDF-YajC and YidC. Requires Zn(2+) as cofactor.

The protein resides in the cell inner membrane. Its subcellular location is the cytoplasm. The catalysed reaction is ATP + H2O + cellular proteinSide 1 = ADP + phosphate + cellular proteinSide 2.. Its function is as follows. Part of the Sec protein translocase complex. Interacts with the SecYEG preprotein conducting channel. Has a central role in coupling the hydrolysis of ATP to the transfer of proteins into and across the cell membrane, serving both as a receptor for the preprotein-SecB complex and as an ATP-driven molecular motor driving the stepwise translocation of polypeptide chains across the membrane. In Enterobacter sp. (strain 638), this protein is Protein translocase subunit SecA.